The following is a 336-amino-acid chain: MSLETASTPHTTRPEPSRRFSVAPMMDWTDRHCRFFLRLLSRQTLLYTEMVTTGALLHNDAHRFLRHDASEHPLALQLGGSVPADLAACARLAEEAGYDEVNLNVGCPSDRVQNNMIGACLMAHPALVADCVKAMRDAVSTPVTVKHRIGINGRDSYAELSDFVGQVREAGCRSFTVHARIAILEGLSPKENREIPPLRYDIAAQLKRDFPDLEIVLNGGIKTLDECQAHLETFDGVMLGREAYHNPYLLAEVDQQLFGSDAPVVSRSEALAQLRPYIVAHMESGGAMHHVTRHILGLAQGFKGARRFRQLLSADIHKAAEPLAVFDQAVELLQGR.

Residues 24–26 (PMM) and Gln77 each bind FMN. The active-site Proton donor is Cys107. Residues Lys146, His178, 218–220 (NGG), and 240–241 (GR) contribute to the FMN site.

It belongs to the Dus family. DusA subfamily. FMN is required as a cofactor.

The catalysed reaction is 5,6-dihydrouridine(20) in tRNA + NADP(+) = uridine(20) in tRNA + NADPH + H(+). It carries out the reaction 5,6-dihydrouridine(20) in tRNA + NAD(+) = uridine(20) in tRNA + NADH + H(+). The enzyme catalyses 5,6-dihydrouridine(20a) in tRNA + NADP(+) = uridine(20a) in tRNA + NADPH + H(+). It catalyses the reaction 5,6-dihydrouridine(20a) in tRNA + NAD(+) = uridine(20a) in tRNA + NADH + H(+). Its function is as follows. Catalyzes the synthesis of 5,6-dihydrouridine (D), a modified base found in the D-loop of most tRNAs, via the reduction of the C5-C6 double bond in target uridines. Specifically modifies U20 and U20a in tRNAs. In Pseudomonas putida (strain ATCC 47054 / DSM 6125 / CFBP 8728 / NCIMB 11950 / KT2440), this protein is tRNA-dihydrouridine(20/20a) synthase.